The following is a 371-amino-acid chain: Putative agmatine deiminase (371 aa).

The active-site Amidino-cysteine intermediate is Cys361.

The protein belongs to the agmatine deiminase family.

It catalyses the reaction agmatine + H2O = N-carbamoylputrescine + NH4(+). The polypeptide is Putative agmatine deiminase (Selenomonas ruminantium).